The following is a 510-amino-acid chain: MDEKTKKAEEMALSLTRAVAGGDEQVAMKCAIWLAEQRVPLSVQLKPEVSPTQDIRLWVSVEDAQMHTVTIWLTVRPDMTVASLKDMVFLDYGFPPVLQQWVIGQRLARDQETLHSHGVRQNGDSAYLYLLSARNTSLNPQELQRERQLRMLEDLGFKDLTLQPRGPLEPGPPKPGVPQEPGRGQPDAVPEPPPVGWQCPGCTFINKPTRPGCEMCCRARPEAYQVPASYQPDEEERARLAGEEEALRQYQQRKQQQQEGNYLQHVQLDQRSLVLNTEPAECPVCYSVLAPGEAVVLRECLHTFCRECLQGTIRNSQEAEVSCPFIDNTYSCSGKLLEREIKALLTPEDYQRFLDLGISIAENRSAFSYHCKTPDCKGWCFFEDDVNEFTCPVCFHVNCLLCKAIHEQMNCKEYQEDLALRAQNDVAARQTTEMLKVMLQQGEAMRCPQCQIVVQKKDGCDWIRCTVCHTEICWVTKGPRWGPGGPGDTSGGCRCRVNGIPCHPSCQNCH.

The residue at position 1 (M1) is an N-acetylmethionine. An interaction with IRF3 region spans residues 1-220; sequence MDEKTKKAEE…PGCEMCCRAR (220 aa). An interaction with TAB2 region spans residues 1-270; it reads MDEKTKKAEE…NYLQHVQLDQ (270 aa). At S50 the chain carries Phosphoserine. The region spanning 55–119 is the Ubiquitin-like domain; the sequence is IRLWVSVEDA…DQETLHSHGV (65 aa). Residues 69 to 131 are interaction with RNF31; sequence VTIWLTVRPD…NGDSAYLYLL (63 aa). Positions 160–192 are disordered; it reads LTLQPRGPLEPGPPKPGVPQEPGRGQPDAVPEP. Positions 167–178 are enriched in pro residues; sequence PLEPGPPKPGVP. The RanBP2-type zinc finger occupies 193–222; that stretch reads PPVGWQCPGCTFINKPTRPGCEMCCRARPE. Residues 233-261 are a coiled coil; it reads DEEERARLAGEEEALRQYQQRKQQQQEGN. Residues 278–506 form a TRIAD supradomain region; that stretch reads EPAECPVCYS…VNGIPCHPSC (229 aa). C282, C285, C300, H302, C305, C308, and C323 together coordinate Zn(2+). An RING-type 1 zinc finger spans residues 282 to 332; it reads CPVCYSVLAPGEAVVLRECLHTFCRECLQGTIRNSQEAEVSCPFIDNTYSC. Y330 carries the phosphotyrosine modification. Zn(2+) is bound by residues C332, C371, C376, C391, C394, C399, C402, H406, C411, C447, and C450. An IBR-type zinc finger spans residues 351–411; it reads QRFLDLGISI…CKAIHEQMNC (61 aa). The segment at 447–476 adopts an RING-type 2; atypical zinc-finger fold; sequence CPQCQIVVQKKDGCDWIRCTVCHTEICWVT. Residue C460 is part of the active site. C465 and C468 together coordinate Zn(2+).

The protein belongs to the RBR family. Component of the LUBAC complex (linear ubiquitin chain assembly complex) which consists of SHARPIN, RBCK1 and RNF31. LUBAC has a MW of approximately 600 kDa suggesting a heteromultimeric assembly of its subunits. Interacts with beta-I-type (PRKCB1) and zeta-type protein kinase C (PRKCZ). Interacts with UBE2L3. Interacts with PRKCH. Associates with the TNF-R1 signaling complex (TNF-RSC) in a stimulation-dependent manner. Interacts with EYA1, TAB2, TAB3, MAP3K7 TRAF6 and RIPK1. Interacts with IRF3. As to quaternary structure, interacts with IREB2 only in iron-rich conditions. In terms of assembly, (Microbial infection) Interacts with hepatitis B virus/HBV protein HBx; this interaction is required to activate transcription of the viral genome. Post-translationally, auto-ubiquitinated. Auto-ubiquitination leads to degradation by the proteasome. In terms of processing, phosphorylated. In vitro, phosphorylation inhibits auto-ubiquitination activity. (Microbial infection) Ubiquitinated by S.flexneri E3 ubiquitin-protein ligases IpaH1.4 and IpaH2.5, leading to its degradation by the proteasome, thereby preventing formation of the bacterial ubiquitin coat and activation of innate immunity.

It catalyses the reaction [E2 ubiquitin-conjugating enzyme]-S-ubiquitinyl-L-cysteine + [acceptor protein]-L-lysine = [E2 ubiquitin-conjugating enzyme]-L-cysteine + [acceptor protein]-N(6)-ubiquitinyl-L-lysine.. It functions in the pathway protein modification; protein ubiquitination. In terms of biological role, E3 ubiquitin-protein ligase, which accepts ubiquitin from specific E2 ubiquitin-conjugating enzymes, such as UBE2L3/UBCM4, and then transfers it to substrates. Functions as an E3 ligase for oxidized IREB2 and both heme and oxygen are necessary for IREB2 ubiquitination. Promotes ubiquitination of TAB2 and IRF3 and their degradation by the proteasome. Component of the LUBAC complex which conjugates linear ('Met-1'-linked) polyubiquitin chains to substrates and plays a key role in NF-kappa-B activation and regulation of inflammation. LUBAC conjugates linear polyubiquitin to IKBKG and RIPK1 and is involved in activation of the canonical NF-kappa-B and the JNK signaling pathways. Linear ubiquitination mediated by the LUBAC complex interferes with TNF-induced cell death and thereby prevents inflammation. LUBAC is recruited to the TNF-R1 signaling complex (TNF-RSC) following polyubiquitination of TNF-RSC components by BIRC2 and/or BIRC3 and to conjugate linear polyubiquitin to IKBKG and possibly other components contributing to the stability of the complex. The LUBAC complex is also involved in innate immunity by conjugating linear polyubiquitin chains at the surface of bacteria invading the cytosol to form the ubiquitin coat surrounding bacteria. LUBAC is not able to initiate formation of the bacterial ubiquitin coat, and can only promote formation of linear polyubiquitins on pre-existing ubiquitin. The bacterial ubiquitin coat acts as an 'eat-me' signal for xenophagy and promotes NF-kappa-B activation. Together with OTULIN, the LUBAC complex regulates the canonical Wnt signaling during angiogenesis. Binds polyubiquitin of different linkage types. The polypeptide is RanBP-type and C3HC4-type zinc finger-containing protein 1 (RBCK1) (Homo sapiens (Human)).